The sequence spans 184 residues: UPF0398 protein BAA_1648 (184 aa).

Belongs to the UPF0398 family.

In Bacillus anthracis (strain A0248), this protein is UPF0398 protein BAA_1648.